Here is a 198-residue protein sequence, read N- to C-terminus: MTAQNENAQAQAEQVEVANEAQLEQTAEVQQEQPVEAELAAAYARINELETYVAEADNREKDIQLRAQAEIQNIRRRAEQDIEKAHKFALEKFSKELLTVVDNLERGLNALDTAVTDEKTQALVDGVEMTHKEFISTLAKFGVEAVGVVGEAFNPEVHEAISMQPAEGIEANHISVVLQKGYTLQGRVLRPAMVMVAG.

It belongs to the GrpE family. Homodimer.

Its subcellular location is the cytoplasm. Functionally, participates actively in the response to hyperosmotic and heat shock by preventing the aggregation of stress-denatured proteins, in association with DnaK and GrpE. It is the nucleotide exchange factor for DnaK and may function as a thermosensor. Unfolded proteins bind initially to DnaJ; upon interaction with the DnaJ-bound protein, DnaK hydrolyzes its bound ATP, resulting in the formation of a stable complex. GrpE releases ADP from DnaK; ATP binding to DnaK triggers the release of the substrate protein, thus completing the reaction cycle. Several rounds of ATP-dependent interactions between DnaJ, DnaK and GrpE are required for fully efficient folding. This chain is Protein GrpE, found in Actinobacillus pleuropneumoniae serotype 7 (strain AP76).